Reading from the N-terminus, the 256-residue chain is Thiazole synthase (256 aa).

The Schiff-base intermediate with DXP role is filled by Lys97. 1-deoxy-D-xylulose 5-phosphate is bound by residues Gly158, 184–185 (AG), and 206–207 (NT).

The protein belongs to the ThiG family. As to quaternary structure, homotetramer. Forms heterodimers with either ThiH or ThiS.

Its subcellular location is the cytoplasm. It catalyses the reaction [ThiS sulfur-carrier protein]-C-terminal-Gly-aminoethanethioate + 2-iminoacetate + 1-deoxy-D-xylulose 5-phosphate = [ThiS sulfur-carrier protein]-C-terminal Gly-Gly + 2-[(2R,5Z)-2-carboxy-4-methylthiazol-5(2H)-ylidene]ethyl phosphate + 2 H2O + H(+). It participates in cofactor biosynthesis; thiamine diphosphate biosynthesis. In terms of biological role, catalyzes the rearrangement of 1-deoxy-D-xylulose 5-phosphate (DXP) to produce the thiazole phosphate moiety of thiamine. Sulfur is provided by the thiocarboxylate moiety of the carrier protein ThiS. In vitro, sulfur can be provided by H(2)S. This chain is Thiazole synthase, found in Pelotomaculum thermopropionicum (strain DSM 13744 / JCM 10971 / SI).